A 570-amino-acid polypeptide reads, in one-letter code: Sulfite reductase [NADPH] hemoprotein beta-component (570 aa).

[4Fe-4S] cluster-binding residues include cysteine 434, cysteine 440, cysteine 479, and cysteine 483. Cysteine 483 provides a ligand contact to siroheme.

It belongs to the nitrite and sulfite reductase 4Fe-4S domain family. In terms of assembly, alpha(8)-beta(8). The alpha component is a flavoprotein, the beta component is a hemoprotein. It depends on siroheme as a cofactor. Requires [4Fe-4S] cluster as cofactor.

The catalysed reaction is hydrogen sulfide + 3 NADP(+) + 3 H2O = sulfite + 3 NADPH + 4 H(+). It functions in the pathway sulfur metabolism; hydrogen sulfide biosynthesis; hydrogen sulfide from sulfite (NADPH route): step 1/1. Component of the sulfite reductase complex that catalyzes the 6-electron reduction of sulfite to sulfide. This is one of several activities required for the biosynthesis of L-cysteine from sulfate. This is Sulfite reductase [NADPH] hemoprotein beta-component from Escherichia coli (strain SMS-3-5 / SECEC).